The chain runs to 714 residues: ATP-dependent RNA helicase MSS116, mitochondrial (714 aa).

The N-terminal 37 residues, 1–37 (MSWVRSVAIRTALCRQVRSRYQSYGSTRLFSSSLRSW), are a transit peptide targeting the mitochondrion. Positions 74 to 102 (SLEASRKFDKSIFRGLYNSKMKNMTVVQQ) match the Q motif motif. The Helicase ATP-binding domain occupies 106–296 (MPMMDTKTGV…HETIGKEYEY (191 aa)). 119 to 126 (AKTGTGKT) serves as a coordination point for ATP. Residues 234–237 (DEAD) carry the DEAD box motif. A Helicase C-terminal domain is found at 335–498 (HINDKYFKAI…TSPDHFQRLG (164 aa)). The tract at residues 581–714 (SSNDRKSKRT…TYGRRDDSDE (134 aa)) is disordered. 3 stretches are compositionally biased toward basic and acidic residues: residues 619-640 (RSFD…DRKS), 656-671 (YGDK…DKSY), and 679-697 (SNDR…EKRN).

This sequence belongs to the DEAD box helicase family. DDX18/HAS1 subfamily.

Its subcellular location is the mitochondrion matrix. The enzyme catalyses ATP + H2O = ADP + phosphate + H(+). Its function is as follows. ATP-dependent RNA helicase required for mitochondrial splicing of group I and II introns. Also required for efficient mitochondrial translation. In Meyerozyma guilliermondii (strain ATCC 6260 / CBS 566 / DSM 6381 / JCM 1539 / NBRC 10279 / NRRL Y-324) (Yeast), this protein is ATP-dependent RNA helicase MSS116, mitochondrial (MSS116).